We begin with the raw amino-acid sequence, 183 residues long: Protein jagunal homolog 1-B (183 aa).

Residues 1 to 39 (MASRAGPRATGTDGSDYQHRERVASHYQMSVALKSEIKK) lie on the Cytoplasmic side of the membrane. Residues 40-60 (LNIAHAVVWFLVAAQVLVSQL) form a helical membrane-spanning segment. At 61 to 71 (NLVSHKVVASP) the chain is on the lumenal side. A helical membrane pass occupies residues 72–92 (YQWEYTYLLSIIPTVFSFMAL). The Cytoplasmic segment spans residues 93 to 99 (PKNNISY). The chain crosses the membrane as a helical span at residues 100–120 (LVISMISGGLFCIGPILYGGM). Topologically, residues 121-137 (EMFPVAQQLYRHGKAYR) are lumenal. A helical transmembrane segment spans residues 138 to 158 (FIFGFSAVSIMYLVLIISVQV). The Cytoplasmic segment spans residues 159-183 (HGWQIYYSKKLLDAWFTNTQDKKKK).

The protein belongs to the jagunal family.

The protein resides in the endoplasmic reticulum membrane. In terms of biological role, endoplasmic reticulum transmembrane protein involved in vesicle-mediated transport, which is required for neutrophil function. This Danio rerio (Zebrafish) protein is Protein jagunal homolog 1-B (jagn1b).